We begin with the raw amino-acid sequence, 206 residues long: Enterobactin synthase component D (206 aa).

Residues Asp107, Glu109, and Glu152 each coordinate Mg(2+).

Belongs to the P-Pant transferase superfamily. EntD family. As to quaternary structure, entB, EntD, EntE, and EntF form a multienzyme complex called enterobactin synthase. Mg(2+) is required as a cofactor.

The protein localises to the membrane. The enzyme catalyses apo-[aryl-carrier protein] + CoA = holo-[aryl-carrier protein] + adenosine 3',5'-bisphosphate + H(+). It carries out the reaction apo-[peptidyl-carrier protein] + CoA = holo-[peptidyl-carrier protein] + adenosine 3',5'-bisphosphate + H(+). The protein operates within siderophore biosynthesis; enterobactin biosynthesis. Functionally, involved in the biosynthesis of the siderophore enterobactin (enterochelin), which is a macrocyclic trimeric lactone of N-(2,3-dihydroxybenzoyl)-serine. The serine trilactone serves as a scaffolding for the three catechol functionalities that provide hexadentate coordination for the tightly ligated iron(2+) atoms. Plays an essential role in the assembly of the enterobactin by catalyzing the transfer of the 4'-phosphopantetheine (Ppant) moiety from coenzyme A to the apo-domains of both EntB (ArCP domain) and EntF (PCP domain) to yield their holo-forms which make them competent for the activation of 2,3-dihydroxybenzoate (DHB) and L-serine, respectively. The sequence is that of Enterobactin synthase component D from Escherichia coli O157:H7.